Reading from the N-terminus, the 272-residue chain is uncharacterized protein (272 aa).

Transmembrane regions (helical) follow at residues 9-29 (GGDI…ASEH) and 252-272 (SHIS…ISFI).

Its subcellular location is the membrane. This is an uncharacterized protein from Caenorhabditis elegans.